Reading from the N-terminus, the 307-residue chain is Aspartate carbamoyltransferase catalytic subunit (307 aa).

Carbamoyl phosphate contacts are provided by Arg54 and Thr55. Residue Lys83 coordinates L-aspartate. The carbamoyl phosphate site is built by Arg104, His132, and Gln135. Residues Arg165 and Arg228 each contribute to the L-aspartate site. The carbamoyl phosphate site is built by Leu267 and Pro268.

Belongs to the aspartate/ornithine carbamoyltransferase superfamily. ATCase family. As to quaternary structure, heterododecamer (2C3:3R2) of six catalytic PyrB chains organized as two trimers (C3), and six regulatory PyrI chains organized as three dimers (R2).

The catalysed reaction is carbamoyl phosphate + L-aspartate = N-carbamoyl-L-aspartate + phosphate + H(+). It functions in the pathway pyrimidine metabolism; UMP biosynthesis via de novo pathway; (S)-dihydroorotate from bicarbonate: step 2/3. In terms of biological role, catalyzes the condensation of carbamoyl phosphate and aspartate to form carbamoyl aspartate and inorganic phosphate, the committed step in the de novo pyrimidine nucleotide biosynthesis pathway. This is Aspartate carbamoyltransferase catalytic subunit from Clostridium perfringens (strain SM101 / Type A).